The following is a 399-amino-acid chain: C-type lectin domain family 4 member M (399 aa).

Over 1–49 the chain is Cytoplasmic; it reads MSDSKEQRVQPLGLLEEDPTTSGIRLFPRDFQFQQTHGHKSSTGCLGHG. The Endocytosis signal motif lies at 14-15; the sequence is LL. Residues 50 to 70 traverse the membrane as a helical; Signal-anchor for type II membrane protein segment; sequence PLVLQLLSFTLLAGVLVAILV. The Extracellular portion of the chain corresponds to 71–399; sequence QVYKVPSSLS…KKPTACFRDE (329 aa). N-linked (GlcNAc...) asparagine glycosylation is present at Asn92. Repeat copies occupy residues 108 to 130, 131 to 153, 154 to 176, 177 to 199, 200 to 222, 223 to 245, and 246 to 268. Residues 108 to 269 are 7 X approximate tandem repeats; it reads KLQEIYQELI…AFERLCCRCP (162 aa). Cystine bridges form between Cys265–Cys395, Cys268–Cys279, Cys296–Cys389, and Cys368–Cys381. The 117-residue stretch at 274 to 390 folds into the C-type lectin domain; the sequence is FFQGNCYFIS…CNVDNYWICK (117 aa). Residues Glu359, Asn361, Ser363, Glu366, Asn377, and Asp378 each contribute to the Ca(2+) site. N-linked (GlcNAc...) asparagine glycosylation occurs at Asn361.

Homotetramer.

It is found in the membrane. Functionally, probable pathogen-recognition receptor involved in peripheral immune surveillance in liver. May mediate the endocytosis of pathogens which are subsequently degraded in lysosomal compartments. Probably recognizes in a calcium-dependent manner high mannose N-linked oligosaccharides in a variety of pathogen antigens. Is a receptor for ICAM3, probably by binding to mannose-like carbohydrates. The polypeptide is C-type lectin domain family 4 member M (CLEC4M) (Hylobates lar (Lar gibbon)).